A 951-amino-acid chain; its full sequence is Serine/threonine-protein kinase 10 (951 aa).

A Protein kinase domain is found at W36–V294. Residues L42–V50 and K65 contribute to the ATP site. D157 acts as the Proton acceptor in catalysis. Residues E319–S330 are compositionally biased toward acidic residues. A disordered region spans residues E319 to S479. Residues D331–A343 show a composition bias toward polar residues. A compositionally biased stretch (basic and acidic residues) spans G345–V356. Residues P364–I373 show a composition bias toward polar residues. 2 stretches are compositionally biased toward basic and acidic residues: residues H374–V394 and H410–G427. Residues A429–R443 are compositionally biased toward polar residues. Residues S483, S487, and S491 each carry the phosphoserine; by PLK1 modification. Positions E583–R723 form a coiled coil. Over residues Q785 to T800 the composition is skewed to basic and acidic residues. A disordered region spans residues Q785 to M804. Residues R898 to E928 adopt a coiled-coil conformation. Positions A930 to S951 are disordered.

It belongs to the protein kinase superfamily. STE Ser/Thr protein kinase family. STE20 subfamily. As to quaternary structure, homodimer. Post-translationally, autophosphorylates. Phosphorylated by plk1/plx1, suggesting the existence of a feedback loop with plk1/plx1. activation of the protein.

The protein resides in the cell membrane. It carries out the reaction L-seryl-[protein] + ATP = O-phospho-L-seryl-[protein] + ADP + H(+). The catalysed reaction is L-threonyl-[protein] + ATP = O-phospho-L-threonyl-[protein] + ADP + H(+). May act as a polo kinase kinase by mediating phosphorylation of plk1/plx1 and subsequent activation of plk1/plx1 during oocyte maturation. The chain is Serine/threonine-protein kinase 10 (stk10) from Xenopus tropicalis (Western clawed frog).